We begin with the raw amino-acid sequence, 218 residues long: Fibroblast growth factor 15 (218 aa).

Positions 1 to 25 (MARKWNGRAVARALVLATLWLAVSG) are cleaved as a signal peptide.

Belongs to the heparin-binding growth factors family. In terms of assembly, interacts with MALRD1. Expressed in the developing brain.

It is found in the secreted. In terms of biological role, involved in the suppression of bile acid biosynthesis through down-regulation of CYP7A1 expression. This Mus musculus (Mouse) protein is Fibroblast growth factor 15 (Fgf15).